Here is a 158-residue protein sequence, read N- to C-terminus: Small ribosomal subunit protein uS15 (158 aa).

The segment covering methionine 1–proline 18 has biased composition (basic residues). The interval methionine 1–alanine 21 is disordered.

This sequence belongs to the universal ribosomal protein uS15 family. In terms of assembly, part of the 30S ribosomal subunit.

This chain is Small ribosomal subunit protein uS15, found in Pyrococcus abyssi (strain GE5 / Orsay).